The chain runs to 156 residues: Protein E6 (156 aa).

Zinc fingers lie at residues 40 to 76 and 113 to 149; these read CNFC…CRLC and CHTC…CRQC.

Belongs to the papillomaviridae E6 protein family. Forms homodimers. Interacts with ubiquitin-protein ligase UBE3A/E6-AP; this interaction stimulates UBE3A ubiquitin activity. Interacts with host BAK1.

It is found in the host cytoplasm. It localises to the host nucleus. Plays a major role in the induction and maintenance of cellular transformation. E6 associates with host UBE3A/E6-AP ubiquitin-protein ligase and modulates its activity. Protects host keratinocytes from apoptosis by mediating the degradation of host BAK1. May also inhibit host immune response. This is Protein E6 from Homo sapiens (Human).